Consider the following 316-residue polypeptide: HPr kinase/phosphorylase (316 aa).

Residues His-143 and Lys-164 contribute to the active site. 158–165 (GEAGSGKS) lines the ATP pocket. Ser-165 provides a ligand contact to Mg(2+). Asp-182 acts as the Proton acceptor; for phosphorylation activity. Proton donor; for dephosphorylation activity in catalysis. The tract at residues 206–215 (LEVRGLGVLN) is important for the catalytic mechanism of both phosphorylation and dephosphorylation. Glu-207 is a Mg(2+) binding site. The active site involves Arg-251. Residues 272-277 (PVMPGR) form an important for the catalytic mechanism of dephosphorylation region.

This sequence belongs to the HPrK/P family. In terms of assembly, homohexamer. The cofactor is Mg(2+).

It catalyses the reaction [HPr protein]-L-serine + ATP = [HPr protein]-O-phospho-L-serine + ADP + H(+). The catalysed reaction is [HPr protein]-O-phospho-L-serine + phosphate + H(+) = [HPr protein]-L-serine + diphosphate. Functionally, catalyzes the ATP- as well as the pyrophosphate-dependent phosphorylation of a specific serine residue in HPr, a phosphocarrier protein of the phosphoenolpyruvate-dependent sugar phosphotransferase system (PTS). HprK/P also catalyzes the pyrophosphate-producing, inorganic phosphate-dependent dephosphorylation (phosphorolysis) of seryl-phosphorylated HPr (P-Ser-HPr). The chain is HPr kinase/phosphorylase from Xanthomonas axonopodis pv. citri (strain 306).